A 227-amino-acid chain; its full sequence is MYELKEKSYPMQPRERLELLGEEYLSDVELLAILLRTGRKKYSSLNLALELLQHFGTLDNFRKASISELKEISGIGQTKAIELRAMIELGKRIQTTTRKRYGQVLSSKEYGMSLAFEMQNFEQEHLTATYLDGQNQIIEKKTIFIGAFNHATASPREILYHAVKNLSVGLLVAHNHPSGNLQPSQADKIFTKKIKNACDNIGINFIDHIIVGAGNYYSFRERDSNLF.

The MPN domain maps to glutamine 103–asparagine 225. Residues histidine 174, histidine 176, and aspartate 187 each coordinate Zn(2+). The JAMM motif motif lies at histidine 174–aspartate 187.

Belongs to the UPF0758 family.

This Lactococcus lactis subsp. cremoris (strain MG1363) protein is UPF0758 protein llmg_1515.